Consider the following 356-residue polypeptide: Tetraacyldisaccharide 4'-kinase (356 aa).

67 to 74 (FVGGTGKT) contacts ATP.

Belongs to the LpxK family.

The enzyme catalyses a lipid A disaccharide + ATP = a lipid IVA + ADP + H(+). The protein operates within glycolipid biosynthesis; lipid IV(A) biosynthesis; lipid IV(A) from (3R)-3-hydroxytetradecanoyl-[acyl-carrier-protein] and UDP-N-acetyl-alpha-D-glucosamine: step 6/6. Functionally, transfers the gamma-phosphate of ATP to the 4'-position of a tetraacyldisaccharide 1-phosphate intermediate (termed DS-1-P) to form tetraacyldisaccharide 1,4'-bis-phosphate (lipid IVA). This is Tetraacyldisaccharide 4'-kinase from Herminiimonas arsenicoxydans.